We begin with the raw amino-acid sequence, 521 residues long: Maturase K (521 aa).

The protein belongs to the intron maturase 2 family. MatK subfamily.

The protein localises to the plastid. In terms of biological role, usually encoded in the trnK tRNA gene intron. Probably assists in splicing its own and other chloroplast group II introns. This is Maturase K from Cuscuta exaltata (Tall dodder).